We begin with the raw amino-acid sequence, 329 residues long: Chloroplast envelope quinone oxidoreductase homolog (329 aa).

Substrate is bound at residue Arg-58.

The protein belongs to the zinc-containing alcohol dehydrogenase family. Quinone oxidoreductase subfamily. As to quaternary structure, homodimer or homotetramer. Transition to monomer upon NADPH binding. Interacts with calmodulin. Interacts with HP30-1, HP30-2 and HP20.

It localises to the plastid. The protein localises to the chloroplast inner membrane. Functionally, NADPH-dependent alpha,beta-unsaturated oxoene reductase reducing the double bond of medium-chain (C9) to long-chain (C18) reactive electrophile species deriving from poly-unsaturated fatty acid peroxides. The best substrates are 13-lipoxygenase-derived gamma-ketols, but is unable to reduce the double bond of short-chain alkenals and alkenones such as acrolein, crotonaldehyde, 3-buten-2-one, 4-hexen-3-one and trans-2-hexenal, or quinones such as duroquinone, decylubiquinone, coenzyme Q0, menadione, menaquinone and phylloquinone. Can use trans-2-nonenal, trans-3-decen-2-one, 4-hydroxynonenal, 12-oxo-10(E) dodecanoate (traumatin), 4-oxononenal, trans-1,3 diphenyl-2-propenone, trans-1,4-diphenyl-2-butene-1,4-dione, 9-oxo-12,13-epoxy-(10E)-octadecenoic acid (trans-EKODE-1b), 9-hydroxy-12-oxo-10(E)-octadecenoic acid, 9-Hydroxy-12-oxo-10(E),15(Z)-octadecadienoic acid and 9,13-dihydroxy-10-oxo-11-octadecenoic acid as substrates, but has no activity with 13(R,S)-hydroperoxy-9(Z),11(E)-octadecadienoic acid (13-HPOD), 9(S),12(S),13(S)-trihydroxy-10(E)-octadecenoic acid, 13-hydroxy-12-oxo-9(Z)-octadecenoic acid, 9-oxo-10(E),12(Z)-octadecadienoic acid (9-KODE), 13-oxo-9(Z),11(E)-octadecadienoic acid (13-KODE) and 12-oxo-10,15(Z)-phytodienoic acid (12-OPDA). The chain is Chloroplast envelope quinone oxidoreductase homolog from Arabidopsis thaliana (Mouse-ear cress).